The following is a 336-amino-acid chain: Immune-associated nucleotide-binding protein 13 (336 aa).

One can recognise an AIG1-type G domain in the interval 15 to 221; the sequence is KPERTLVLLG…YMADLSHELR (207 aa). The interval 24-31 is G1; the sequence is GRTGNGKS. Residues 24–32 and S45 contribute to the GTP site; that span reads GRTGNGKSA. A G2 region spans residues 51 to 55; the sequence is FITKE. Residues 73–76 form a G3 region; that stretch reads DTPG. Residues 143–146 form a G4 region; the sequence is TNED. The segment at 179 to 181 is G5; that stretch reads DNS. N180 contacts GTP. Positions 265–328 form a coiled coil; that stretch reads KEKISNQLKE…EKETASLRTE (64 aa).

Belongs to the TRAFAC class TrmE-Era-EngA-EngB-Septin-like GTPase superfamily. AIG1/Toc34/Toc159-like paraseptin GTPase family. IAN subfamily. In terms of tissue distribution, expressed in pollen grains.

In Arabidopsis thaliana (Mouse-ear cress), this protein is Immune-associated nucleotide-binding protein 13.